The following is a 211-amino-acid chain: Probable GTP-binding protein EngB (211 aa).

An EngB-type G domain is found at 13-188; it reads SGYEIAFAGR…ASVMAGRLHF (176 aa). Residues 21–28, 48–52, 67–70, 134–137, and 167–169 contribute to the GTP site; these read GRSNAGKS, GRTQM, DLPG, TKAD, and FSS. Mg(2+) is bound by residues S28 and T50.

This sequence belongs to the TRAFAC class TrmE-Era-EngA-EngB-Septin-like GTPase superfamily. EngB GTPase family. Requires Mg(2+) as cofactor.

Functionally, necessary for normal cell division and for the maintenance of normal septation. In Acinetobacter baumannii (strain ATCC 17978 / DSM 105126 / CIP 53.77 / LMG 1025 / NCDC KC755 / 5377), this protein is Probable GTP-binding protein EngB.